Reading from the N-terminus, the 91-residue chain is MQRNLVVLLFLGMVALSSCGFREKHFQRFVKYAVPESTLRTVLQTVVHKVGKTQFGCPAYQGYCDDHCQDIEKKEGFCHGFKCKCGIPMGF.

Positions 1 to 19 (MQRNLVVLLFLGMVALSSC) are cleaved as a signal peptide. The region spanning 54-91 (QFGCPAYQGYCDDHCQDIEKKEGFCHGFKCKCGIPMGF) is the BetaSPN-type CS-alpha/beta domain. Cystine bridges form between cysteine 57–cysteine 78, cysteine 64–cysteine 83, and cysteine 68–cysteine 85.

In terms of tissue distribution, expressed by the venom gland.

It is found in the secreted. Its function is as follows. Has a low affinity binding to potassium channels of rat brain synaptosomes. Displays weak antibacterial activity against Stenotrophomonas sp. Strongly inhibits the development of the Plasmodium berghei ookinetes. Displays slight hemolytic effect on mouse erythrocytes. Induces cytolysis on Xenopus oocytes at high concentrations. Is not toxic towards mice and towards the insect Tenebrio molitor. The chain is Potassium channel toxin MeuTXK-beta-1 from Mesobuthus eupeus (Lesser Asian scorpion).